Consider the following 66-residue polypeptide: Large ribosomal subunit protein bL35 (66 aa).

It belongs to the bacterial ribosomal protein bL35 family.

This Cereibacter sphaeroides (strain ATCC 17029 / ATH 2.4.9) (Rhodobacter sphaeroides) protein is Large ribosomal subunit protein bL35.